A 237-amino-acid polypeptide reads, in one-letter code: Putative biotin ligase (237 aa).

The BPL/LPL catalytic domain occupies 1 to 191 (MEIIHLSEID…KKYKKYSITI (191 aa)).

The protein belongs to the biotin--protein ligase family.

The catalysed reaction is biotin + L-lysyl-[protein] + ATP = N(6)-biotinyl-L-lysyl-[protein] + AMP + diphosphate + H(+). This is Putative biotin ligase from Methanocaldococcus jannaschii (strain ATCC 43067 / DSM 2661 / JAL-1 / JCM 10045 / NBRC 100440) (Methanococcus jannaschii).